The sequence spans 251 residues: DNA repair protein RecO (251 aa).

It belongs to the RecO family.

Its function is as follows. Involved in DNA repair and RecF pathway recombination. This is DNA repair protein RecO from Lactococcus lactis subsp. cremoris (strain SK11).